Consider the following 273-residue polypeptide: 4-hydroxybenzoate octaprenyltransferase (273 aa).

8 helical membrane-spanning segments follow: residues 7 to 27 (IGIY…SEGF), 30 to 50 (LKLL…GCVI), 83 to 103 (FFVL…WLTI), 122 to 142 (WTYF…LMAF), 146 to 166 (LNEI…WTVI), 197 to 217 (LIIG…SNVF), 221 to 241 (ISYH…QYLI), and 253 to 273 (FLHN…SVGL).

Belongs to the UbiA prenyltransferase family. It depends on Mg(2+) as a cofactor.

The protein localises to the cell inner membrane. It carries out the reaction all-trans-octaprenyl diphosphate + 4-hydroxybenzoate = 4-hydroxy-3-(all-trans-octaprenyl)benzoate + diphosphate. The protein operates within cofactor biosynthesis; ubiquinone biosynthesis. Functionally, catalyzes the prenylation of para-hydroxybenzoate (PHB) with an all-trans polyprenyl group. Mediates the second step in the final reaction sequence of ubiquinone-8 (UQ-8) biosynthesis, which is the condensation of the polyisoprenoid side chain with PHB, generating the first membrane-bound Q intermediate 3-octaprenyl-4-hydroxybenzoate. In Vesicomyosocius okutanii subsp. Calyptogena okutanii (strain HA), this protein is 4-hydroxybenzoate octaprenyltransferase.